Here is a 357-residue protein sequence, read N- to C-terminus: S-adenosylmethionine:tRNA ribosyltransferase-isomerase (357 aa).

It belongs to the QueA family. As to quaternary structure, monomer.

It is found in the cytoplasm. It catalyses the reaction 7-aminomethyl-7-carbaguanosine(34) in tRNA + S-adenosyl-L-methionine = epoxyqueuosine(34) in tRNA + adenine + L-methionine + 2 H(+). Its pathway is tRNA modification; tRNA-queuosine biosynthesis. In terms of biological role, transfers and isomerizes the ribose moiety from AdoMet to the 7-aminomethyl group of 7-deazaguanine (preQ1-tRNA) to give epoxyqueuosine (oQ-tRNA). The chain is S-adenosylmethionine:tRNA ribosyltransferase-isomerase from Proteus mirabilis (strain HI4320).